Consider the following 100-residue polypeptide: Putative septation protein SpoVG (100 aa).

This sequence belongs to the SpoVG family.

Its function is as follows. Could be involved in septation. In Staphylococcus aureus (strain MRSA252), this protein is Putative septation protein SpoVG.